Here is a 679-residue protein sequence, read N- to C-terminus: Methionine--tRNA ligase (679 aa).

Positions 15-25 (PYANGPVHIGH) match the 'HIGH' region motif. The Zn(2+) site is built by C147, C150, C160, and C163. The short motif at 332–336 (KISTS) is the 'KMSKS' region element. ATP is bound at residue T335. Residues 578 to 679 (DFMKLDIRVG…KEVKPGSEVK (102 aa)) form the tRNA-binding domain.

It belongs to the class-I aminoacyl-tRNA synthetase family. MetG type 1 subfamily. As to quaternary structure, homodimer. Requires Zn(2+) as cofactor.

The protein resides in the cytoplasm. The enzyme catalyses tRNA(Met) + L-methionine + ATP = L-methionyl-tRNA(Met) + AMP + diphosphate. Its function is as follows. Is required not only for elongation of protein synthesis but also for the initiation of all mRNA translation through initiator tRNA(fMet) aminoacylation. In Parabacteroides distasonis (strain ATCC 8503 / DSM 20701 / CIP 104284 / JCM 5825 / NCTC 11152), this protein is Methionine--tRNA ligase.